A 418-amino-acid polypeptide reads, in one-letter code: Glutamyl-tRNA reductase (418 aa).

Residues 49–52 (TCNR), serine 109, 114–116 (EPQ), and glutamine 120 each bind substrate. Cysteine 50 acts as the Nucleophile in catalysis. Residue 189 to 194 (GAGETI) coordinates NADP(+).

This sequence belongs to the glutamyl-tRNA reductase family. Homodimer.

It catalyses the reaction (S)-4-amino-5-oxopentanoate + tRNA(Glu) + NADP(+) = L-glutamyl-tRNA(Glu) + NADPH + H(+). It participates in porphyrin-containing compound metabolism; protoporphyrin-IX biosynthesis; 5-aminolevulinate from L-glutamyl-tRNA(Glu): step 1/2. Catalyzes the NADPH-dependent reduction of glutamyl-tRNA(Glu) to glutamate 1-semialdehyde (GSA). The protein is Glutamyl-tRNA reductase of Escherichia coli O127:H6 (strain E2348/69 / EPEC).